The primary structure comprises 116 residues: MPRVKRGNVARKRRKKILKLAKGFRGSHSKLFRTANQQVMKALRNAYRDRRKKKRDFRRLWIVRVNAAARLNGLSYSKLTHQLKKANIEINRKMLAELAVVDPQAFAQVVEVAKSA.

The protein belongs to the bacterial ribosomal protein bL20 family.

Its function is as follows. Binds directly to 23S ribosomal RNA and is necessary for the in vitro assembly process of the 50S ribosomal subunit. It is not involved in the protein synthesizing functions of that subunit. This is Large ribosomal subunit protein bL20 from Picosynechococcus sp. (strain ATCC 27264 / PCC 7002 / PR-6) (Agmenellum quadruplicatum).